We begin with the raw amino-acid sequence, 745 residues long: MAQTINLQLEGMRCAACASSIERAIAKVPGVQSCQVNFALEQAVVSYHGETTPQILTDAVERAGYHARVLKQQVLSSQQTEDRKPVFSAKLVTGLVISAVLFFGSLPMMLGVNIPHFPHIFHDPWLQWLLATPVQFWSGAEFYRGAWKSVRTRSATMDTLVALGTSAAYFYSVAITLFPQWLTSQGLAAHVYFEAAAVVITLILLGRSLEQRARRETSAAIRKLMGLQPQTALVKRGEHWETVAIAELAINDVVRVRPGEKIPVDGVVVAGNSTVDESLVTGESFPVDKTVGTEVIGATLNKSGSLDIQVSKLGQDSVLAQIIQLVQQAQASKAPIQHFVDRITHWFVPTVIVVAIAAFCIWWLTTGNITLAVLTLVEVLIIACPCALGLATPTSVMVGTGKGAEYGVLIKEASSLEMAEKLTAIVLDKTGTLTQGKPSVTNFFTLSPTSTEESLQLIQWAASVEQYSEHPLAEAVVNYGQSQQVSLLEIDNFQAIAGCGVAGQWQGQWIRLGTSNWLTDLGVTGTEHQPWQSQAQQWEKEQKTVIWLAVDTEVKALLAIADAIKPSSPQVVQALKKLGLSVYMLTGDNQATAQAIADTVGIRHVLAQVRPGDKAQQVEQLQQKGNIVAMVGDGINDAPALAQADVGIAIGTGTDVAIAASDITLIAGDLQGILTAIKLSRATMGNIRQNLFFAFIYNVIGIPVAAGLFYPLFGLLLNPILAGAAMAFSSVSVVTNALRLKKFCP.

Residues 1-94 (MAQTINLQLE…PVFSAKLVTG (94 aa)) lie on the Cytoplasmic side of the membrane. The region spanning 3–68 (QTINLQLEGM…AVERAGYHAR (66 aa)) is the HMA domain. The a metal cation site is built by cysteine 14 and cysteine 17. A helical transmembrane segment spans residues 95 to 115 (LVISAVLFFGSLPMMLGVNIP). The Extracellular segment spans residues 116–125 (HFPHIFHDPW). Residues 126-145 (LQWLLATPVQFWSGAEFYRG) form a helical membrane-spanning segment. Residues 146–152 (AWKSVRT) are Cytoplasmic-facing. Residues 153 to 173 (RSATMDTLVALGTSAAYFYSV) form a helical membrane-spanning segment. Topologically, residues 174 to 193 (AITLFPQWLTSQGLAAHVYF) are extracellular. The helical transmembrane segment at 194–214 (EAAAVVITLILLGRSLEQRAR) threads the bilayer. Residues 215–342 (RETSAAIRKL…KAPIQHFVDR (128 aa)) are Cytoplasmic-facing. A helical membrane pass occupies residues 343 to 365 (ITHWFVPTVIVVAIAAFCIWWLT). Topologically, residues 366-372 (TGNITLA) are extracellular. The chain crosses the membrane as a helical span at residues 373 to 390 (VLTLVEVLIIACPCALGL). Topologically, residues 391–543 (ATPTSVMVGT…QAQQWEKEQK (153 aa)) are cytoplasmic. The active-site 4-aspartylphosphate intermediate is aspartate 428. Residues 544–564 (TVIWLAVDTEVKALLAIADAI) form a helical membrane-spanning segment. The Extracellular portion of the chain corresponds to 565-687 (KPSSPQVVQA…KLSRATMGNI (123 aa)). Residues aspartate 633 and aspartate 637 each coordinate Mg(2+). Residues 688–707 (RQNLFFAFIYNVIGIPVAAG) traverse the membrane as a helical segment. The Cytoplasmic segment spans residues 708–719 (LFYPLFGLLLNP). The helical transmembrane segment at 720–738 (ILAGAAMAFSSVSVVTNAL) threads the bilayer. At 739-745 (RLKKFCP) the chain is on the extracellular side.

It belongs to the cation transport ATPase (P-type) (TC 3.A.3) family. Type IB subfamily.

Its subcellular location is the cell membrane. It carries out the reaction Cu(+)(in) + ATP + H2O = Cu(+)(out) + ADP + phosphate + H(+). In terms of biological role, may play a role in the osmotic adaptation. The chain is Probable copper-transporting ATPase PacS (pacS) from Synechocystis sp. (strain ATCC 27184 / PCC 6803 / Kazusa).